A 302-amino-acid chain; its full sequence is Phospho-N-acetylmuramoyl-pentapeptide-transferase (302 aa).

9 helical membrane-spanning segments follow: residues 1–21 (MIAA…KLFR), 42–62 (GTPT…GMIS), 68–88 (VLLG…LSVV), 123–143 (FFGF…LVIV), 154–174 (GLDG…WFFL), 178–198 (GVSE…LVFN), 204–224 (IFMG…VSVL), 229–249 (FYLV…ILQV), and 279–299 (IVAV…EIFG).

The protein belongs to the glycosyltransferase 4 family. MraY subfamily. The cofactor is Mg(2+).

It is found in the cell inner membrane. It catalyses the reaction UDP-N-acetyl-alpha-D-muramoyl-L-alanyl-gamma-D-glutamyl-meso-2,6-diaminopimeloyl-D-alanyl-D-alanine + di-trans,octa-cis-undecaprenyl phosphate = di-trans,octa-cis-undecaprenyl diphospho-N-acetyl-alpha-D-muramoyl-L-alanyl-D-glutamyl-meso-2,6-diaminopimeloyl-D-alanyl-D-alanine + UMP. It functions in the pathway cell wall biogenesis; peptidoglycan biosynthesis. Its function is as follows. Catalyzes the initial step of the lipid cycle reactions in the biosynthesis of the cell wall peptidoglycan: transfers peptidoglycan precursor phospho-MurNAc-pentapeptide from UDP-MurNAc-pentapeptide onto the lipid carrier undecaprenyl phosphate, yielding undecaprenyl-pyrophosphoryl-MurNAc-pentapeptide, known as lipid I. In Thermotoga petrophila (strain ATCC BAA-488 / DSM 13995 / JCM 10881 / RKU-1), this protein is Phospho-N-acetylmuramoyl-pentapeptide-transferase.